The following is a 125-amino-acid chain: Small ribosomal subunit protein uS12c (125 aa).

This sequence belongs to the universal ribosomal protein uS12 family. As to quaternary structure, part of the 30S ribosomal subunit.

The protein resides in the plastid. Functionally, with S4 and S5 plays an important role in translational accuracy. Located at the interface of the 30S and 50S subunits. This is Small ribosomal subunit protein uS12c (rps12) from Euglena longa (Euglenophycean alga).